The sequence spans 160 residues: 6,7-dimethyl-8-ribityllumazine synthase (160 aa).

5-amino-6-(D-ribitylamino)uracil-binding positions include Phe23, 61-63 (SFE), and 85-87 (AVI). (2S)-2-hydroxy-3-oxobutyl phosphate is bound at residue 90-91 (DT). Residue His93 is the Proton donor of the active site. Residue Phe118 participates in 5-amino-6-(D-ribitylamino)uracil binding. Arg132 lines the (2S)-2-hydroxy-3-oxobutyl phosphate pocket.

This sequence belongs to the DMRL synthase family.

The enzyme catalyses (2S)-2-hydroxy-3-oxobutyl phosphate + 5-amino-6-(D-ribitylamino)uracil = 6,7-dimethyl-8-(1-D-ribityl)lumazine + phosphate + 2 H2O + H(+). Its pathway is cofactor biosynthesis; riboflavin biosynthesis; riboflavin from 2-hydroxy-3-oxobutyl phosphate and 5-amino-6-(D-ribitylamino)uracil: step 1/2. In terms of biological role, catalyzes the formation of 6,7-dimethyl-8-ribityllumazine by condensation of 5-amino-6-(D-ribitylamino)uracil with 3,4-dihydroxy-2-butanone 4-phosphate. This is the penultimate step in the biosynthesis of riboflavin. This Parasynechococcus marenigrum (strain WH8102) protein is 6,7-dimethyl-8-ribityllumazine synthase.